Reading from the N-terminus, the 345-residue chain is Protein GAMETE CELL DEFECTIVE 1, mitochondrial (345 aa).

The N-terminal 43 residues, 1 to 43 (MLALRKTLLHGRLPAAPPAAAAAAIASRIPALLRRLSSSPGDG), are a transit peptide targeting the mitochondrion. Residues 36–81 (LSSSPGDGQGGDEWGSSWSTGITKEHFDGSDAAVGRPVTSPSKPVS) are disordered.

As to expression, expressed in roots, stems, leaves and florets.

The protein resides in the mitochondrion. Functionally, essential for fertility (male and female gametophyte functions and development). Required for the integrity of female gametic mitochondria. Involved in embryo apical-basal patterning, and particularly dorsal-ventral patterning, during early embryogenesis, and endosperm free nucleus positioning and development as well as early endosperm development, probably by modulating the expression pattern of related genes (e.g. AL1, MYB3/AL2, CYP78A13/GE, PNH1, HAZ1, MPK6 and OSH1). Has function in triggering of endosperm programmed cell death (PCD) leading to syncytial endosperm cellularization and starchy endosperm cell maturation. Implicated in central vacuole dynamics necessary for microspore development leading to pollen production, and for pollen development and germination. In Oryza sativa subsp. japonica (Rice), this protein is Protein GAMETE CELL DEFECTIVE 1, mitochondrial.